The sequence spans 416 residues: Formyl-CoA:oxalate CoA-transferase (416 aa).

CoA is bound by residues 17 to 18, arginine 38, 72 to 75, 96 to 98, histidine 104, and 137 to 140; these read QS, LNTK, NFH, and KAYE. The active-site Nucleophile is the aspartate 169. Substrate is bound at residue 248 to 250; sequence GGQ. 273–275 provides a ligand contact to CoA; sequence QEQ.

It belongs to the CoA-transferase III family. Frc subfamily. Homodimer.

The catalysed reaction is formyl-CoA + oxalate = oxalyl-CoA + formate. It participates in metabolic intermediate degradation; oxalate degradation; CO(2) and formate from oxalate: step 1/2. Functionally, involved in the catabolism of oxalate and in the adapatation to low pH via the induction of the oxalate-dependent acid tolerance response (ATR). Catalyzes the transfer of the CoA moiety from formyl-CoA to oxalate. This chain is Formyl-CoA:oxalate CoA-transferase, found in Escherichia coli O81 (strain ED1a).